The primary structure comprises 521 residues: MIESGIWSRMSEMIRSSGHSHHCSPQEYRFLPPVGDDDLPGDLQSLSWLTAVDVPRLQQMANGRIDLGSSGVTHPHPGALAGTADLHVGAAPRPLLRRSQTAVVPRGVLGLSPIGNHRASAEQMNQFPAGGQASSGLQEMPQLYSPATQIPFPLPLGSQQCPPAGLYGSPFSARPSYPQAHGAMHASQEPHPKHYPKPIYSYSCLIAMALKNSKTGSLPVSEIYSFMKEHFPYFKTAPDGWKNSVRHNLSLNKCFEKVETKSSGSSRKGCLWALNLARIDKMEEEMHKWKRKDLAAIHRSMANPEELDKLISDRPESCRRPGKRGEPKAPMLTHATTVAMAHSCLAISQLPPKPLMTLSLQSVPLHHQLQPQAHLAPDSPAPAQTPPLHALPSLSPGPLPQPAMGRVPGDFLNINSDMNTEVDALDPSIMDFALQGNLWEEMKEDSFSLDTLEAFGDSPLGCDLGAPSLTPVSGNSDQSFPDVQVTGLYAAYSTAADGVAPSAANSAQYLGTPGNKPIALL.

Positions 197–293 (KPIYSYSCLI…EEMHKWKRKD (97 aa)) form a DNA-binding region, fork-head. Residues 371-406 (PQAHLAPDSPAPAQTPPLHALPSLSPGPLPQPAMGR) are disordered.

In terms of tissue distribution, mainly expressed in proliferator progenitor cells in brain and retina rather than differentiated cells. In contrast, is expressed only in postmitotic epithelial cells rather than in proliferative progenitors in the proximal airway.

It is found in the nucleus. Functionally, transcription factor essential for neural and some non-neural tissues development, such as retina and lung respectively. Binds to an 11-bp consensus sequence containing the invariant tetranucleotide 5'-ACGC-3'. During development of the central nervous system, is required to specify the amacrine and horizontal cell fates from multipotent retinal progenitors while suppressing the alternative photoreceptor cell fates through activating DLL4-NOTCH signaling. Also acts synergistically with ASCL1/MASH1 to activate DLL4-NOTCH signaling and drive commitment of p2 progenitors to the V2b interneuron fates during spinal cord neurogenesis. In development of non-neural tissues, plays an essential role in the specification of the atrioventricular canal and is indirectly required for patterning the distal airway during lung development. The chain is Forkhead box protein N4 (Foxn4) from Mus musculus (Mouse).